The following is a 438-amino-acid chain: ATP-dependent protease ATPase subunit HslU (438 aa).

ATP-binding positions include Ile18, Gly60–Glu65, Asp251, Glu316, and Arg388.

This sequence belongs to the ClpX chaperone family. HslU subfamily. A double ring-shaped homohexamer of HslV is capped on each side by a ring-shaped HslU homohexamer. The assembly of the HslU/HslV complex is dependent on binding of ATP.

It localises to the cytoplasm. Functionally, ATPase subunit of a proteasome-like degradation complex; this subunit has chaperone activity. The binding of ATP and its subsequent hydrolysis by HslU are essential for unfolding of protein substrates subsequently hydrolyzed by HslV. HslU recognizes the N-terminal part of its protein substrates and unfolds these before they are guided to HslV for hydrolysis. This Jannaschia sp. (strain CCS1) protein is ATP-dependent protease ATPase subunit HslU.